The following is a 349-amino-acid chain: Magnesium-protoporphyrin IX monomethyl ester [oxidative] cyclase (349 aa).

The protein belongs to the AcsF family. Fe cation is required as a cofactor.

Its subcellular location is the plastid. It localises to the chloroplast. It catalyses the reaction Mg-protoporphyrin IX 13-monomethyl ester + 3 NADPH + 3 O2 + 2 H(+) = 3,8-divinyl protochlorophyllide a + 3 NADP(+) + 5 H2O. It participates in porphyrin-containing compound metabolism; chlorophyll biosynthesis (light-independent). Its function is as follows. Catalyzes the formation of the isocyclic ring in chlorophyll biosynthesis. Mediates the cyclase reaction, which results in the formation of divinylprotochlorophyllide (Pchlide) characteristic of all chlorophylls from magnesium-protoporphyrin IX 13-monomethyl ester (MgPMME). The sequence is that of Magnesium-protoporphyrin IX monomethyl ester [oxidative] cyclase from Pyropia yezoensis (Susabi-nori).